Consider the following 250-residue polypeptide: Isoprenyl transferase (250 aa).

Asp27 is a catalytic residue. Asp27 provides a ligand contact to Mg(2+). Residues Gly28–Arg31, Trp32, His48, and Ser76–Glu78 contribute to the substrate site. Asn79 functions as the Proton acceptor in the catalytic mechanism. Residues Phe80, Arg82, Arg199, and Arg205 to Ser207 each bind substrate. Glu218 is a binding site for Mg(2+).

Belongs to the UPP synthase family. In terms of assembly, homodimer. Mg(2+) serves as cofactor.

Catalyzes the condensation of isopentenyl diphosphate (IPP) with allylic pyrophosphates generating different type of terpenoids. This Chlamydia caviae (strain ATCC VR-813 / DSM 19441 / 03DC25 / GPIC) (Chlamydophila caviae) protein is Isoprenyl transferase.